The following is a 484-amino-acid chain: Nuclear rim protein 1 (484 aa).

Ser-3 is subject to Phosphoserine. 2 consecutive transmembrane segments (helical) span residues 145 to 165 and 252 to 272; these read FTIFILLSLNLYVSCKFMFGY and TAIVFLSFSDVSFTSAIAIVF. The tract at residues 416 to 457 is disordered; sequence SSNENLEKGGAFLPNQDQNRPSKSLSPLRKTPLSARQKRFEG. Ser-417 is modified (phosphoserine). The span at 430–440 shows a compositional bias: polar residues; it reads NQDQNRPSKSL. Ser-474 carries the phosphoserine modification.

This sequence belongs to the NUR1 family. In terms of assembly, interacts with CSM1.

It localises to the nucleus membrane. Its function is as follows. Member of a perinuclear network that controls recombination at multiple loci to maintain genome stability. Required for rDNA repeat stability. The protein is Nuclear rim protein 1 (NUR1) of Saccharomyces cerevisiae (strain Lalvin EC1118 / Prise de mousse) (Baker's yeast).